The sequence spans 563 residues: Src substrate protein p85 (563 aa).

Cortactin repeat units follow at residues 89–125 (ASHGYGGKFGVEQDRMDKSAVGHEYQSKLSKHCSQVD), 126–162 (SVKGFGGKFGVQTDRVDQSAVGFEYQGKTEKHASQKD), 163–199 (YSSGFGGKYGVQADRVDKSAVGFDYQGKTEKHESQKD), 200–236 (YSKGFGGKYGVDKDKVDKSAVGFEYQGKTEKHESQKD), 237–273 (YVKGFGGKFGVQTDRQDKCALGWDHQEKVQLHESQKD), and 274–310 (YKSGFGGKFGVQTERQDPSAVGFDYKEKLAKHESQQD). Residues 311-333 (YSKGFGGKYGVQKDRMDKNAATF) form a Cortactin 7; truncated repeat. Residues 331–477 (ATFEDIEKPT…EAVSQREAEY (147 aa)) form a disordered region. Residues 349–410 (VERVANKTSS…EEQAKAKKQT (62 aa)) adopt a coiled-coil conformation. Basic and acidic residues predominate over residues 366–405 (LAKEKEQEDRRKAEAERAQRMAREKQEQEEARRKLEEQAK). The SH3 domain occupies 505–563 (ELGITAIALYDYQAAGDDEISFDPDDIITNIEMIDDGWWRGVCKGRYGLFPANYVELRQ).

Acetylated. Post-translationally, in normal cells, appears to be phosphorylated on serine and threonine; in cells expressing activated forms of pp60-src, they become heavily phosphorylated on tyrosine in vitro. Tyrosine phosphorylation in transformed cells may contribute to cellular growth regulation and transformation.

The protein resides in the cytoplasm. It localises to the cytoskeleton. It is found in the cell projection. Its subcellular location is the lamellipodium. The protein localises to the ruffle. The protein resides in the dendrite. It localises to the cell membrane. It is found in the podosome. Its subcellular location is the cell junction. The protein localises to the focal adhesion. The protein resides in the membrane. It localises to the clathrin-coated pit. It is found in the dendritic spine. Its subcellular location is the cell cortex. The protein localises to the endoplasmic reticulum. Functionally, contributes to the organization of the actin cytoskeleton and cell shape. Plays a role in the formation of lamellipodia and in cell migration. Plays a role in the regulation of neuron morphology, axon growth and formation of neuronal growth cones, and may play a role in the regulation of neuronal spine density. Plays a role in focal adhesion assembly and turnover. Plays a role in intracellular protein transport and endocytosis, and in modulating the levels of potassium channels present at the cell membrane. Plays a role in endocytosis via clathrin-coated pits. In Gallus gallus (Chicken), this protein is Src substrate protein p85 (CTTN1).